A 323-amino-acid polypeptide reads, in one-letter code: Zinc finger C2HC domain-containing protein 1A (323 aa).

The C2HC/C3H-type 1 zinc finger occupies 14–43 (ELLPCKICGRTFFPVALKKHGPICQKTATK). Residues cysteine 18, cysteine 21, histidine 33, and cysteine 37 each contribute to the Zn(2+) site. A disordered region spans residues 42–81 (TKKRKTFDSSRQRAEGTDIPTVKPLKPRPEPPKKPSNWRR). Basic and acidic residues predominate over residues 47-57 (TFDSSRQRAEG). The C2HC/C3H-type 2 zinc finger occupies 117–146 (DYIQCPYCQRRFNENAADRHINFCKEQAAR). Cysteine 121, cysteine 124, histidine 136, and cysteine 140 together coordinate Zn(2+). A disordered region spans residues 149–258 (NKGKFSTDTK…NPASGVLTSK (110 aa)). Residues 177-197 (SPGTTSSGSSRLPQPSGTSKT) show a composition bias toward polar residues. A compositionally biased stretch (low complexity) spans 198-214 (VVGAPSGKVSSVSSSSG). Serine 221 carries the phosphoserine modification. The residue at position 242 (threonine 242) is a Phosphothreonine. Serine 290 carries the phosphoserine modification.

Belongs to the ZC2HC1 family. Zn(2+) is required as a cofactor.

The chain is Zinc finger C2HC domain-containing protein 1A (ZC2HC1A) from Bos taurus (Bovine).